Here is a 361-residue protein sequence, read N- to C-terminus: Phosphoribosylformylglycinamidine cyclo-ligase (361 aa).

Belongs to the AIR synthase family.

It is found in the cytoplasm. The catalysed reaction is 2-formamido-N(1)-(5-O-phospho-beta-D-ribosyl)acetamidine + ATP = 5-amino-1-(5-phospho-beta-D-ribosyl)imidazole + ADP + phosphate + H(+). It functions in the pathway purine metabolism; IMP biosynthesis via de novo pathway; 5-amino-1-(5-phospho-D-ribosyl)imidazole from N(2)-formyl-N(1)-(5-phospho-D-ribosyl)glycinamide: step 2/2. This is Phosphoribosylformylglycinamidine cyclo-ligase from Bartonella henselae (strain ATCC 49882 / DSM 28221 / CCUG 30454 / Houston 1) (Rochalimaea henselae).